The chain runs to 330 residues: Diacylglycerol acyltransferase/mycolyltransferase Ag85B (330 aa).

The first 40 residues, 1 to 40 (MTDLSKKVRAWGRRLLVGTAAAVTLPGLIGLAGGAPTAGA), serve as a signal peptide directing secretion. Substrate is bound at residue 82–83 (LR). The interval 98-108 (FEWYYQSGLSI) is fibronectin-binding. The cysteines at positions 127 and 132 are disulfide-linked. Substrate contacts are provided by Ser166 and Asp194. Residue Ser166 is the Nucleophile of the active site. Residue Glu270 is part of the active site. Substrate is bound by residues 272-275 (FVRS), Lys279, and 302-304 (HSW). His302 is an active-site residue.

It belongs to the mycobacterial A85 antigen family.

The protein resides in the secreted. It catalyses the reaction 2 alpha,alpha'-trehalose 6-mycolate = alpha,alpha'-trehalose 6,6'-bismycolate + alpha,alpha-trehalose. It carries out the reaction an acyl-CoA + a 1,2-diacyl-sn-glycerol = a triacyl-sn-glycerol + CoA. Functionally, the antigen 85 proteins (FbpA, FbpB, FbpC) are responsible for the high affinity of mycobacteria for fibronectin, a large adhesive glycoprotein, which facilitates the attachment of M.tuberculosis to murine alveolar macrophages (AMs). They also help to maintain the integrity of the cell wall by catalyzing the transfer of mycolic acids to cell wall arabinogalactan and through the synthesis of alpha,alpha-trehalose dimycolate (TDM, cord factor). They catalyze the transfer of a mycoloyl residue from one molecule of alpha,alpha-trehalose monomycolate (TMM) to another TMM, leading to the formation of TDM. The protein is Diacylglycerol acyltransferase/mycolyltransferase Ag85B (fbpB) of Mycobacterium scrofulaceum.